Here is a 395-residue protein sequence, read N- to C-terminus: Putative ankyrin repeat protein RF_0950 (395 aa).

ANK repeat units lie at residues 3-32 (YQKE…NPNT), 36-65 (YGKL…DPNA), 69-98 (IKDP…NPNV), 101-130 (RHEN…DPNQ), 134-166 (NGNT…EKAL), 172-201 (NGET…TVNI), and 205-234 (AGNT…ELNE). The region spanning 272 to 395 (KTKLIYQGGD…YLKVPILKEK (124 aa)) is the Glutamine amidotransferase type-1 domain. Cys-377 functions as the Nucleophile in the catalytic mechanism.

This Rickettsia felis (strain ATCC VR-1525 / URRWXCal2) (Rickettsia azadi) protein is Putative ankyrin repeat protein RF_0950.